The sequence spans 318 residues: Porphobilinogen deaminase (318 aa).

C245 is modified (S-(dipyrrolylmethanemethyl)cysteine).

The protein belongs to the HMBS family. Monomer. Requires dipyrromethane as cofactor.

The enzyme catalyses 4 porphobilinogen + H2O = hydroxymethylbilane + 4 NH4(+). Its pathway is porphyrin-containing compound metabolism; protoporphyrin-IX biosynthesis; coproporphyrinogen-III from 5-aminolevulinate: step 2/4. The protein operates within porphyrin-containing compound metabolism; chlorophyll biosynthesis. Tetrapolymerization of the monopyrrole PBG into the hydroxymethylbilane pre-uroporphyrinogen in several discrete steps. This Prochlorococcus marinus (strain MIT 9215) protein is Porphobilinogen deaminase.